Reading from the N-terminus, the 119-residue chain is Large ribosomal subunit protein uL22 (119 aa).

This sequence belongs to the universal ribosomal protein uL22 family. In terms of assembly, part of the 50S ribosomal subunit.

This protein binds specifically to 23S rRNA; its binding is stimulated by other ribosomal proteins, e.g. L4, L17, and L20. It is important during the early stages of 50S assembly. It makes multiple contacts with different domains of the 23S rRNA in the assembled 50S subunit and ribosome. Functionally, the globular domain of the protein is located near the polypeptide exit tunnel on the outside of the subunit, while an extended beta-hairpin is found that lines the wall of the exit tunnel in the center of the 70S ribosome. This chain is Large ribosomal subunit protein uL22, found in Rickettsia prowazekii (strain Madrid E).